A 528-amino-acid polypeptide reads, in one-letter code: Phenylalanine--tRNA ligase alpha subunit (528 aa).

Positions 365 and 444 each coordinate L-phenylalanine. Position 446 (E446) interacts with Mg(2+). F469 provides a ligand contact to L-phenylalanine.

It belongs to the class-II aminoacyl-tRNA synthetase family. Phe-tRNA synthetase alpha subunit type 2 subfamily. Tetramer of two alpha and two beta subunits. It depends on Mg(2+) as a cofactor.

It is found in the cytoplasm. The catalysed reaction is tRNA(Phe) + L-phenylalanine + ATP = L-phenylalanyl-tRNA(Phe) + AMP + diphosphate + H(+). This is Phenylalanine--tRNA ligase alpha subunit from Borreliella burgdorferi (strain ATCC 35210 / DSM 4680 / CIP 102532 / B31) (Borrelia burgdorferi).